A 6629-amino-acid chain; its full sequence is Replicase polyprotein 1ab (6629 aa).

The Cytoplasmic portion of the chain corresponds to 1 to 1750 (MASSLKQGVS…VASYKTVLCK (1750 aa)). Residues 675–780 (KTVTFGETTV…SCHLIYRDYE (106 aa)) enclose the Ubiquitin-like 1 domain. Residues 783-802 (DDIEEEDAEECDTDSGEAEE) form a disordered region. The Macro domain occupies 1003 to 1179 (VKPATCEKPK…YFDVTCKQKT (177 aa)). Positions 1175–1227 (CKQKTIYLTEDGVKYRSIVLKPGDSLGQFGQVYAKNKIVFTADDVEDKEILYV) constitute a Ubiquitin-like 2 domain. The Peptidase C16 domain maps to 1236–1497 (EYYGLDAQKY…SKSVKEDVSN (262 aa)). The active-site For PL-PRO activity is the C1274. Zn(2+)-binding residues include C1353, C1355, C1387, and C1390. The segment at 1353 to 1390 (CNCGIKSYELRGLEACIQPVRATNLLHFKTQYSNCPTC) adopts a C4-type; degenerate zinc-finger fold. Residues H1437 and D1448 each act as for PL-PRO activity in the active site. Residues 1751–1771 (VVLATLLIVWFVYTSNPVMFT) form a helical membrane-spanning segment. The interval 1751–1864 (VVLATLLIVW…KPVAGFVIIC (114 aa)) is HD1. The region spanning 1769 to 1833 (MFTGIRVLDF…AYSVEQVYKD (65 aa)) is the 3Ecto domain. The Lumenal segment spans residues 1772-1843 (GIRVLDFLFE…AASGFIFNWN (72 aa)). 2 disulfide bridges follow: C1785–C1811 and C1802–C1808. A helical transmembrane segment spans residues 1844–1864 (WLYLVFLILFVKPVAGFVIIC). The Cytoplasmic portion of the chain corresponds to 1865–2280 (YCVKYLVLNS…TFKCFKSYFK (416 aa)). The tract at residues 1911 to 2001 (YIQVHHILYC…KLKRHVKPTA (91 aa)) is Y1. A CoV Nsp3 Y domain is found at 1911–2263 (YIQVHHILYC…HTQKLLVEKK (353 aa)). Zn(2+)-binding residues include H1915, C1920, C1925, C1928, C1961, H1964, C1968, and C1971. Positions 1915–1928 (HHILYCKDVTCEVC) are ZF1. A ZF2 region spans residues 1961–1971 (CKRHNWYCRNC). The segment at 2002–2104 (YAYHVVDEAC…ILDQALYEQL (103 aa)) is Y2. Residues 2002-2263 (YAYHVVDEAC…HTQKLLVEKK (262 aa)) form a coV-Y region. The Y3 stretch occupies residues 2105-2163 (VVEPVSKSVIDKVCSILSSIISVDTAALNYKAGTLRDALLSITKDEEAVDMAIFCHNHD). The tract at residues 2164 to 2263 (VDYTGDGFTN…HTQKLLVEKK (100 aa)) is Y4. A helical transmembrane segment spans residues 2281–2301 (WLLIFYILFTACCSGYYYMEV). An HD2 region spans residues 2281–2664 (WLLIFYILFT…LACCYLGFII (384 aa)). At 2302–2559 (SKSFVHPMYD…FFTGVNPNIY (258 aa)) the chain is on the lumenal side. The chain crosses the membrane as a helical span at residues 2560-2580 (MQLATMFLILVVVVLIFAMVI). Over 2581–2611 (KFQGVFKAYATTVFITMLVWVINAFILCVHS) the chain is Cytoplasmic. The chain crosses the membrane as a helical span at residues 2612–2632 (YNSVLAVILLVLYCYASLVTS). Residues 2633–2643 (RNTVIIMHCWL) are Lumenal-facing. The chain crosses the membrane as a helical span at residues 2644-2664 (VFTFGLIVPTWLACCYLGFII). Residues 2665–3096 (YMYTPLFLWC…SSFVRKATSW (432 aa)) are Cytoplasmic-facing. The region spanning 2684–2779 (LYDGNEFVGN…RYSIGVSRLQ (96 aa)) is the Nsp4C domain. One can recognise a Peptidase C30 domain in the interval 2780 to 3086 (SGFKKLVSPS…FNQIGGVRLQ (307 aa)). Residues H2820 and C2922 each act as for 3CL-PRO activity in the active site. A helical membrane pass occupies residues 3097–3117 (FWSRCVLACFLFVLCAIVLFT). The interval 3097–3317 (FWSRCVLACF…WLCTCYFGLY (221 aa)) is HD3. The Lumenal portion of the chain corresponds to 3118 to 3121 (AVPL). Residues 3122–3142 (KFYVYAAVILLMAVLFISFTV) traverse the membrane as a helical segment. At 3143-3151 (KHVMAYMDT) the chain is on the cytoplasmic side. Residues 3152–3172 (FLLPTLITVIIGVCAEVPFIY) form a helical membrane-spanning segment. Over 3173–3188 (NTLISQVVIFLSQWYD) the chain is Lumenal. Residues 3189 to 3209 (PVVFDTMVPWMFLPLVLYTAF) form a helical membrane-spanning segment. At 3210-3257 (KCVQGCYMNSFNTSLLMLYQFVKLGFVIYTSSNTLTAYTEGNWELFFE) the chain is on the cytoplasmic side. Residues 3258–3278 (LVHTTVLANVSSNSLIGLFVF) form a helical membrane-spanning segment. Residues 3279–3296 (KCAKWMLYYCNATYLNNY) are Lumenal-facing. The helical transmembrane segment at 3297–3317 (VLMAVMVNCIGWLCTCYFGLY) threads the bilayer. The Cytoplasmic segment spans residues 3318-6629 (WWVNKVFGLT…FTSDSFVCTM (3312 aa)). The RdRp Nsp7 cofactor domain maps to 3380–3462 (AKLSDVKCTT…DILKRSTVLQ (83 aa)). One can recognise a RdRp Nsp8 cofactor domain in the interval 3463–3672 (SVTQEFSHIP…GHNKVDVVLQ (210 aa)). A Nsp9 ssRNA-binding domain is found at 3673-3783 (NNELMPHGVK…GAISNVVVLQ (111 aa)). Residues 3785-3926 (KGHETEEVDA…CDSLRQPKSS (142 aa)) enclose the ExoN/MTase coactivator domain. Zn(2+) is bound by residues C3858, C3861, H3867, C3878, C3904, C3907, C3915, and C3917. Zinc fingers lie at residues 3858–3878 (CLYCRAHIAHPGSVGNLDGRC) and 3904–3917 (CTVCQCWIGYGCQC). The NiRAN domain occupies 3940–4198 (YLNRVRGSSE…APERYFEYDV (259 aa)). Residues 4203 to 4301 (KSYDLLKYDY…MNQDNTMSFS (99 aa)) enclose the Nsp12 Interface domain. Zn(2+) is bound by residues H4232, C4238, C4243, C4247, and C4424. The Nsp12 RNA-dependent RNA polymerase domain occupies 4302 to 4868 (KMGLSQLMQF…NMYRAPTTLQ (567 aa)). A rdRp Fingers N-ter region spans residues 4304-4517 (GLSQLMQFVG…HQKILKSIVN (214 aa)). The segment at 4518 to 4556 (TRNASVVIGTTKFYGGWDNMLRNLIQGVEDPILMGWDYP) is rdRp Palm N-ter. Residues 4548–4710 (PILMGWDYPK…CYNNTLAKQG (163 aa)) enclose the RdRp catalytic domain. The rdRp Fingers C-ter stretch occupies residues 4557–4615 (KCDRAMPNLLRIAASLVLARKHTNCCSWSERIYRLYNECAQVLSETVLATGGIYVKPGG). Zn(2+)-binding residues include H4578, C4581, and C4582. Residues 4616–4751 (TSSGDATTAY…EKGPHEFCSQ (136 aa)) are rdRp Palm C-ter. Residues S4695, D4696, and D4697 contribute to the active site. The rdRp Thumb stretch occupies residues 4752–4868 (HTMLVEVDGE…NMYRAPTTLQ (117 aa)). Residues 4869-4981 (SCGVCVVCNS…DDFNQLATTN (113 aa)) enclose the CV ZBD domain. C4873, C4876, C4884, C4887, C4894, C4897, H4901, H4907, C4918, C4923, C4940, and H4943 together coordinate Zn(2+). Residues 5125–5305 (MVPECFVNNI…MVCVKPDIFL (181 aa)) form the (+)RNA virus helicase ATP-binding domain. Residue 5150 to 5157 (GPPGSGKS) participates in ATP binding. The (+)RNA virus helicase C-terminal domain occupies 5306-5477 (AKCYRCPKEI…QGTGLFKICN (172 aa)). Positions 5539–5753 (MFITRDEAIR…RCLAINNAFC (215 aa)) constitute an ExoN domain. Residues D5557, E5559, and E5658 contribute to the active site. 7 residues coordinate Zn(2+): C5674, C5676, C5692, H5695, H5723, C5727, and H5730. Active-site residues include H5734 and D5739. C5745 contacts Zn(2+). Positions 5762 to 5989 (YPHIANEDEV…NLWKSFSALQ (228 aa)) constitute an N7-MTase domain. 5797-5803 (DIGNPKG) is an S-adenosyl-L-methionine binding site. The tract at residues 5877-5891 (CNGGSLYVNKHAFYT) is gpppA-binding. Residues C5915, C5935, C5946, and H5949 each contribute to the Zn(2+) site. The region spanning 5990 to 6050 (SIDNIAYNMY…SVAFELYAKR (61 aa)) is the Nsp15 N-terminal oligomerization domain. The AV-Nsp11N/CoV-Nsp15M domain occupies 6051–6166 (NIRTLPNNRI…VYKRVNGAFV (116 aa)). The NendoU domain occupies 6183–6324 (EPRSDIERDF…EDGSIKTCYP (142 aa)). Catalysis depends on residues H6212, H6227, K6267, K6371, D6455, K6499, and E6532. The Nidovirus-type SAM-dependent 2'-O-MTase domain maps to 6327 to 6626 (QSAWTCGYNM…NTSFTSDSFV (300 aa)).

It belongs to the coronaviruses polyprotein 1ab family. Interacts with host PHB and PHB2. As to quaternary structure, interacts with papain-like protease and non-structural protein 6. In terms of assembly, monomer. Homodimer. Only the homodimer shows catalytic activity. Eight copies of nsp7 and eight copies of nsp8 assemble to form a heterohexadecamer dsRNA-encircling ring structure. As to quaternary structure, eight copies of nsp7 and eight copies of nsp8 assemble to form a heterohexadecamer dsRNA-encircling ring structure. Interacts with ORF6 protein. In terms of assembly, homodimer. Homododecamer. Interacts with proofreading exoribonuclease nsp14 and 2'-O-methyltransferase nsp16; these interactions enhance nsp14 and nsp16 enzymatic activities. As to quaternary structure, interacts with host DDX1 (via C-terminus). Interacts with non-structural protein 10. In terms of assembly, homohexamer. Interacts with non-structural protein 10. The cofactor is Mn(2+). Requires Zn(2+) as cofactor. Post-translationally, specific enzymatic cleavages in vivo by its own proteases yield mature proteins. 3C-like proteinase nsp5 liberates nsps 6-16 from the polyprotein. Papain-like and 3C-like proteinases are autocatalytically processed. In terms of processing, N-glycosylated.

It is found in the host endoplasmic reticulum membrane. Its subcellular location is the host cytoplasm. The protein resides in the host perinuclear region. The protein localises to the host endoplasmic reticulum. It localises to the host endoplasmic reticulum-Golgi intermediate compartment. It catalyses the reaction Thiol-dependent hydrolysis of ester, thioester, amide, peptide and isopeptide bonds formed by the C-terminal Gly of ubiquitin (a 76-residue protein attached to proteins as an intracellular targeting signal).. The catalysed reaction is RNA(n) + a ribonucleoside 5'-triphosphate = RNA(n+1) + diphosphate. The enzyme catalyses ATP + H2O = ADP + phosphate + H(+). It carries out the reaction uridylyl-uridylyl-ribonucleotide-RNA = a 3'-end uridylyl-2',3'-cyclophospho-uridine-RNA + a 5'-end dephospho-ribonucleoside-RNA. It catalyses the reaction a 5'-end diphospho-ribonucleoside in mRNA + GTP + H(+) = a 5'-end (5'-triphosphoguanosine)-ribonucleoside in mRNA + diphosphate. The catalysed reaction is a 5'-end (N(7)-methyl 5'-triphosphoguanosine)-ribonucleoside in mRNA + S-adenosyl-L-methionine = a 5'-end (N(7)-methyl 5'-triphosphoguanosine)-(2'-O-methyl-ribonucleoside) in mRNA + S-adenosyl-L-homocysteine + H(+). Its function is as follows. Multifunctional protein involved in the transcription and replication of viral RNAs. Contains the proteinases responsible for the cleavages of the polyprotein. In terms of biological role, may play a role in the modulation of host cell survival signaling pathway by interacting with host PHB and PHB2. Indeed, these two proteins play a role in maintaining the functional integrity of the mitochondria and protecting cells from various stresses. Functionally, responsible for the cleavages located at the N-terminus of the replicase polyprotein. In addition, PL-PRO possesses a deubiquitinating/deISGylating activity and processes both 'Lys-48'- and 'Lys-63'-linked polyubiquitin chains from cellular substrates. Plays a role in host membrane rearrangement that leads to creation of cytoplasmic double-membrane vesicles (DMV) necessary for viral replication. Alone is able to induce paired membranes. Coexpression of nsp3 and nsp4 does not result in the formation of DMVs. Its function is as follows. Responsible for the majority of cleavages as it cleaves the C-terminus of replicase polyprotein at 11 sites. Recognizes substrates containing the core sequence [ILMVF]-Q-|-[SGACN]. Inhibited by the substrate-analog Cbz-Val-Asn-Ser-Thr-Leu-Gln-CMK. In terms of biological role, forms a hexadecamer with nsp8 (8 subunits of each) that may participate in viral replication by acting as a primase. Alternatively, may synthesize substantially longer products than oligonucleotide primers. Functionally, forms a hexadecamer with nsp7 (8 subunits of each) that may participate in viral replication by acting as a primase. Alternatively, may synthesize substantially longer products than oligonucleotide primers. Forms a primer, NSP9-pU, which is utilized by the polymerase for the initiation of RNA chains. Interacts with ribosome signal recognition particle RNA (SRP). Together with NSP8, suppress protein integration into the cell membrane, thereby disrupting host immune defenses. Its function is as follows. Plays a pivotal role in viral transcription by stimulating both nsp14 3'-5' exoribonuclease and nsp16 2'-O-methyltransferase activities. Therefore plays an essential role in viral mRNAs cap methylation. In terms of biological role, RNA-directed RNA polymerase that catalyzes the transcription of viral genomic and subgenomic RNAs. Acts in complex with nsp7 and nsp8 to transcribe both the minus and positive strands of genomic RNA. The kinase-like NiRAN domain of NSP12 attaches one or more nucleotides to the amino terminus of NSP9, forming a covalent RNA-protein intermediate that serves as transcription/replication primer. Subgenomic RNAs (sgRNAs) are formed by discontinuous transcription: The polymerase has the ability to pause at transcription-regulating sequences (TRS) and jump to the leader TRS, resulting in a major deletion. This creates a series of subgenomic RNAs that are replicated, transcribed and translated. In addition, Nsp12 is a subunit of the viral RNA capping enzyme that catalyzes the RNA guanylyltransferase reaction for genomic and sub-genomic RNAs. Subsequently, the NiRAN domain transfers RNA to GDP, and forms the core cap structure GpppA-RNA. Functionally, multi-functional protein with a zinc-binding domain in N-terminus displaying RNA and DNA duplex-unwinding activities with 5' to 3' polarity. Activity of helicase is dependent on magnesium. Enzyme possessing two different activities: an exoribonuclease activity acting on both ssRNA and dsRNA in a 3' to 5' direction and a N7-guanine methyltransferase activity. Acts as a proofreading exoribonuclease for RNA replication, thereby lowering The sensitivity of the virus to RNA mutagens. Its function is as follows. Plays a role in viral transcription/replication and prevents the simultaneous activation of host cell dsRNA sensors, such as MDA5/IFIH1, OAS, and PKR. Acts by degrading the 5'-polyuridines generated during replication of the poly(A) region of viral genomic and subgenomic RNAs. Catalyzes a two-step reaction in which a 2'3'-cyclic phosphate (2'3'-cP) is first generated by 2'-O transesterification, which is then hydrolyzed to a 3'-phosphate (3'-P). If not degraded, poly(U) RNA would hybridize with poly(A) RNA tails and activate host dsRNA sensors. In terms of biological role, methyltransferase that mediates mRNA cap 2'-O-ribose methylation to the 5'-cap structure of viral mRNAs. N7-methyl guanosine cap is a prerequisite for binding of nsp16. Therefore plays an essential role in viral mRNAs cap methylation which is essential to evade immune system. This Gallus gallus (Chicken) protein is Replicase polyprotein 1ab (rep).